Consider the following 710-residue polypeptide: multidrug resistance regulator 2 (710 aa).

Positions 11–37 (CDACRSRKIKCNRQTPCASCHKSKRDC) form a DNA-binding region, zn(2)-C6 fungal-type. 2 helical membrane-spanning segments follow: residues 475-495 (DLVIFSVNFLLVYMYYSLYLF) and 525-545 (LFLAYFNLNYIHLVLMITNFL).

It is found in the nucleus. It localises to the membrane. Transcription factor that controls the expression of CDR1, the major multidrug efflux pump. Required for yeast cell adherence to silicone substrate and plays a role in virulence. The sequence is that of multidrug resistance regulator 2 from Candida albicans (strain SC5314 / ATCC MYA-2876) (Yeast).